The sequence spans 153 residues: ORM1-like protein 3 (153 aa).

Residues Met1–Gly21 are Cytoplasmic-facing. 2 consecutive transmembrane segments (helical) span residues Ile22 to Phe42 and Val43 to Phe63. Residues Leu64 to Gln94 are Cytoplasmic-facing. A helical transmembrane segment spans residues Phe95–Thr117. The Extracellular segment spans residues Lys118–Arg121. The helical transmembrane segment at Val122–Phe142 threads the bilayer. Pro137 carries the post-translational modification Hydroxyproline. Over His143 to Tyr153 the chain is Cytoplasmic.

The protein belongs to the ORM family. Ceramide-sensitive subunit of the serine palmitoyltransferase (SPT) complex, which is also composed of SPTLC1, SPTLC2/3 and SPTSSA/B. In terms of processing, when hydroxylated at Pro-137, ubiquitinated via 'Lys-48'-linkage, leading to proteasomal degradation. In endothelial cells, ORMDL3 proteasomal degradation is controlled by the sphingosine 1-phosphate receptor signaling pathway.

The protein localises to the endoplasmic reticulum membrane. Plays an essential role in the homeostatic regulation of sphingolipid de novo biosynthesis by modulating the activity of the serine palmitoyltransferase (SPT) in response to ceramide levels. When complexed to SPT, the binding of ceramides to its N-terminus stabilizes a conformation that block SPT substrate entry, hence preventing SPT catalytic activity. Through this mechanism, maintains ceramide levels at sufficient concentrations for the production of complex sphingolipids, but which prevents the accumulation of ceramides to levels that trigger apoptosis. In Danio rerio (Zebrafish), this protein is ORM1-like protein 3 (ormdl3).